Reading from the N-terminus, the 471-residue chain is Glutamate--tRNA ligase (471 aa).

The short motif at 9 to 19 (PSPTGFLHVGG) is the 'HIGH' region element. Residues Cys-98, Cys-100, Cys-125, and Asp-127 each coordinate Zn(2+). The short motif at 237–241 (KLSKR) is the 'KMSKS' region element. Lys-240 lines the ATP pocket.

The protein belongs to the class-I aminoacyl-tRNA synthetase family. Glutamate--tRNA ligase type 1 subfamily. Monomer. Zn(2+) serves as cofactor.

It localises to the cytoplasm. The catalysed reaction is tRNA(Glu) + L-glutamate + ATP = L-glutamyl-tRNA(Glu) + AMP + diphosphate. Its function is as follows. Catalyzes the attachment of glutamate to tRNA(Glu) in a two-step reaction: glutamate is first activated by ATP to form Glu-AMP and then transferred to the acceptor end of tRNA(Glu). This is Glutamate--tRNA ligase from Aeromonas salmonicida (strain A449).